The following is a 386-amino-acid chain: Terpene cyclase 6 (386 aa).

Asp-128, Asn-276, and Ser-280 together coordinate Mg(2+). A D(D/E)XX(D/E) motif motif is present at residues Asp-128–Asp-132. Positions Asn-276–Glu-284 match the NSE motif motif. Residues Trp-360–Tyr-367 carry the WxxxxxRY motif motif. 2 residues coordinate (2E,6E)-farnesyl diphosphate: Arg-366 and Tyr-367.

Belongs to the terpene synthase family. Homodimer. Mg(2+) serves as cofactor.

The catalysed reaction is (2E,6E)-farnesyl diphosphate + H2O = trichobrasilenol + diphosphate. The enzyme catalyses (2E,6E)-farnesyl diphosphate = alpha-humulene + diphosphate. It catalyses the reaction (2E,6E)-farnesyl diphosphate = (-)-(E)-beta-caryophyllene + diphosphate. It carries out the reaction (2E,6E)-farnesyl diphosphate = (E)-2-epi-beta-caryophyllene + diphosphate. The catalysed reaction is (2E,6E)-farnesyl diphosphate + H2O = (+)-isoafricanol + diphosphate. The enzyme catalyses (2E,6E)-farnesyl diphosphate + H2O = (+)-(2S,3R,9R)-pristinol + diphosphate. It catalyses the reaction (2E,6E)-farnesyl diphosphate = african-3-ene + diphosphate. It carries out the reaction (2E,6E)-farnesyl diphosphate = african-1-ene + diphosphate. It functions in the pathway sesquiterpene biosynthesis. Its function is as follows. Terpene cyclase that is able to convert FPP into a mixture of sesquiterpene hydrocarbons and alcohols. The main product is trichobrasilenol. Additionally, side products include alpha-humulene, caryophyllene, 2-epi-caryophyllene, african-3-ene, african-1-ene, isoafricanol and pristinol. Does not accept GPP, GGPP, and GFPP as substrates. The chain is Terpene cyclase 6 from Hypocrea atroviridis (Trichoderma atroviride).